We begin with the raw amino-acid sequence, 264 residues long: Glutamate racemase (264 aa).

Substrate contacts are provided by residues 10-11 and 42-43; these read DS and YG. C73 functions as the Proton donor/acceptor in the catalytic mechanism. Residue 74 to 75 coordinates substrate; sequence NT. C183 serves as the catalytic Proton donor/acceptor. 184 to 185 provides a ligand contact to substrate; sequence TH.

This sequence belongs to the aspartate/glutamate racemases family.

The catalysed reaction is L-glutamate = D-glutamate. It participates in cell wall biogenesis; peptidoglycan biosynthesis. In terms of biological role, provides the (R)-glutamate required for cell wall biosynthesis. The protein is Glutamate racemase of Streptococcus equi subsp. zooepidemicus (strain H70).